The sequence spans 379 residues: Anhydro-N-acetylmuramic acid kinase (379 aa).

Position 9–16 (9–16) interacts with ATP; that stretch reads GTSADGVD.

This sequence belongs to the anhydro-N-acetylmuramic acid kinase family.

The enzyme catalyses 1,6-anhydro-N-acetyl-beta-muramate + ATP + H2O = N-acetyl-D-muramate 6-phosphate + ADP + H(+). It participates in amino-sugar metabolism; 1,6-anhydro-N-acetylmuramate degradation. It functions in the pathway cell wall biogenesis; peptidoglycan recycling. Catalyzes the specific phosphorylation of 1,6-anhydro-N-acetylmuramic acid (anhMurNAc) with the simultaneous cleavage of the 1,6-anhydro ring, generating MurNAc-6-P. Is required for the utilization of anhMurNAc either imported from the medium or derived from its own cell wall murein, and thus plays a role in cell wall recycling. The chain is Anhydro-N-acetylmuramic acid kinase from Prochlorococcus marinus (strain MIT 9313).